Here is an 897-residue protein sequence, read N- to C-terminus: Cytokine receptor common subunit beta (897 aa).

A signal peptide spans Met-1–Cys-16. The Extracellular segment spans residues Trp-17–Trp-443. A disulfide bridge links Cys-35 with Cys-45. N-linked (GlcNAc...) asparagine glycosylation is present at Asn-58. 2 disulfide bridges follow: Cys-75–Cys-96 and Cys-86–Cys-91. In terms of domain architecture, Fibronectin type-III 1 spans Pro-133–Gly-240. Asn-191 is a glycosylation site (N-linked (GlcNAc...) asparagine). 2 cysteine pairs are disulfide-bonded: Cys-250–Cys-260 and Cys-289–Cys-306. Positions Gln-339–Thr-436 constitute a Fibronectin type-III 2 domain. N-linked (GlcNAc...) asparagine glycosylation is present at Asn-346. The WSXWS motif signature appears at Trp-425 to Ser-429. Residues Val-444–Leu-460 form a helical membrane-spanning segment. Residues Arg-461 to Cys-897 are Cytoplasmic-facing. The Box 1 motif motif lies at Trp-474–Ser-482. Disordered regions lie at residues Gly-498–Arg-517, Ser-532–Cys-630, Pro-648–Gly-812, and Pro-830–Lys-849. The span at Glu-564–Pro-574 shows a compositional bias: pro residues. The span at Ser-723–Pro-752 shows a compositional bias: low complexity. Residue Tyr-766 is modified to Phosphotyrosine. Over residues Pro-830–Ser-840 the composition is skewed to low complexity.

It belongs to the type I cytokine receptor family. Type 4 subfamily. In terms of assembly, heterodimer of an alpha and a beta subunit. The beta subunit is common to the IL3, IL5 and GM-CSF receptors. The signaling GM-CSF receptor complex is a dodecamer of two head-to-head hexamers of two alpha, two beta, and two ligand subunits. Interacts with TMEM102; this interaction occurs preferentially in the absence of CSF2. Interacts with FCER1G; this interaction is direct. Interacts with LYN. Interacts with JAK1. May be phosphorylated by LYN.

Its subcellular location is the membrane. Its function is as follows. Cell surface receptor that plays a role in immune response and controls the production and differentiation of hematopoietic progenitor cells into lineage-restricted cells. Acts by forming an heterodimeric receptor through interaction with different partners such as IL3RA, IL5RA or CSF2RA. In turn, participates in various signaling pathways including interleukin-3, interleukin-5 and granulocyte-macrophage colony-stimulating factor/CSF2 pathways. In unstimulated conditions, interacts constitutively with JAK1 and ligand binding leads to JAK1 stimulation and subsequent activation of the JAK-STAT pathway. The sequence is that of Cytokine receptor common subunit beta (CSF2RB) from Homo sapiens (Human).